The primary structure comprises 488 residues: Rhamnulokinase (488 aa).

Residue 13–17 (ASSGR) coordinates ATP. A disulfide bridge links cysteine 68 with cysteine 222. Residues glycine 83 and 236 to 238 (HDT) contribute to the substrate site. Aspartate 237 functions as the Proton acceptor in the catalytic mechanism. ATP is bound at residue threonine 259. Asparagine 296 is a substrate binding site. Glutamine 304 is a binding site for ATP. The cysteines at positions 353 and 370 are disulfide-linked. Glycine 402 serves as a coordination point for ATP. Residues cysteine 413 and cysteine 417 are joined by a disulfide bond.

This sequence belongs to the rhamnulokinase family. Mg(2+) is required as a cofactor.

It carries out the reaction L-rhamnulose + ATP = L-rhamnulose 1-phosphate + ADP + H(+). It participates in carbohydrate degradation; L-rhamnose degradation; glycerone phosphate from L-rhamnose: step 2/3. Involved in the catabolism of L-rhamnose (6-deoxy-L-mannose). Catalyzes the transfer of the gamma-phosphate group from ATP to the 1-hydroxyl group of L-rhamnulose to yield L-rhamnulose 1-phosphate. The polypeptide is Rhamnulokinase (Klebsiella pneumoniae subsp. pneumoniae (strain ATCC 700721 / MGH 78578)).